A 423-amino-acid chain; its full sequence is MRFSIISLVSLPLFLGLTYAGGVEKDERNNVCTVKANGKQKDDMPNLFKAFKECGNGGTIIFPEDQSYWIGTRLNPLLNDVTVQWRGKWTFSDNLDYRRNNSFPVAFQNHRVGFIISGHNVTIDGNGNTWYTAEKGVTQSGRPMPFVFWNVSEVNVENFYVKDPPLWSLNIMNGTNMRFNNIYCNATSVDAPYGYNWVQNTDGFGSFSAVNTMDAVNIQLTNFVYQGGDDCITIKPRSYNIDIQNVTCVGGNGIAVGSLGQYLEDSSVENVRVDKVKIIRYNEDMHNSAYIKTWVGALVPQSSYESAGLPCGGGWGNVRNILFSNFEVQGANAGPSVNQDSGNNGSYSGSSLMTVSNIVFANFTGYTSGGTSVTSKVSCSEVHPCYNIEFDDVLLYPGKNASNLGTGSCKYTANGGVHGLEGC.

An N-terminal signal peptide occupies residues 1–20 (MRFSIISLVSLPLFLGLTYA). 5 N-linked (GlcNAc...) asparagine glycosylation sites follow: Asn-100, Asn-120, Asn-150, Asn-173, and Asn-185. Residue Asp-229 is the Proton donor of the active site. A disulfide bridge links Cys-231 with Cys-248. N-linked (GlcNAc...) asparagine glycosylation occurs at Asn-245. Asn-252 is an active-site residue. N-linked (GlcNAc...) asparagine glycosylation is found at Asn-344 and Asn-362. Cys-379 and Cys-385 form a disulfide bridge. An N-linked (GlcNAc...) asparagine glycan is attached at Asn-400. An intrachain disulfide couples Cys-409 to Cys-423.

The protein belongs to the glycosyl hydrolase 28 family.

The protein resides in the secreted. It catalyses the reaction [(1-&gt;4)-alpha-D-galacturonosyl](n) + H2O = alpha-D-galacturonate + [(1-&gt;4)-alpha-D-galacturonosyl](n-1). Functionally, specific in hydrolyzing the terminal glycosidic bond of polygalacturonic acid and oligogalacturonates. The polypeptide is Putative galacturan 1,4-alpha-galacturonidase C (rgxC) (Neosartorya fischeri (strain ATCC 1020 / DSM 3700 / CBS 544.65 / FGSC A1164 / JCM 1740 / NRRL 181 / WB 181) (Aspergillus fischerianus)).